The primary structure comprises 789 residues: Aryl hydrocarbon receptor nuclear translocator (789 aa).

Polar residues predominate over residues 1 to 14; it reads MAATTANPEMTSDV. Residues 1–97 are disordered; sequence MAATTANPEM…RLARENHSEI (97 aa). Residue Ala2 is modified to N-acetylalanine. The segment covering 26 to 35 has biased composition (gly residues); it reads SGPGIQGGGA. Lys58 is covalently cross-linked (Glycyl lysine isopeptide (Lys-Gly) (interchain with G-Cter in SUMO2)). Residues 60–97 are compositionally biased toward basic and acidic residues; it reads LRCDDDQMSNDKERFARSDDEQSSADKERLARENHSEI. Ser77 carries the phosphoserine modification. Residues 88-128 form a DNA-binding region; sequence RLARENHSEIERRRRNKMTAYITELSDMVPTCSALARKPDK. Residues 89–142 form the bHLH domain; it reads LARENHSEIERRRRNKMTAYITELSDMVPTCSALARKPDKLTILRMAVSHMKSL. Positions 112–168 are required for heterodimer formation with HIF1A; that stretch reads LSDMVPTCSALARKPDKLTILRMAVSHMKSLRGTGNTSTDGSYKPSFLTDQELKHLI. The segment at 112–264 is required for heterodimer formation with EPAS1; it reads LSDMVPTCSA…MCMGSRRSFI (153 aa). PAS domains are found at residues 161-235 and 349-419; these read DQEL…LTGR and PNCT…VKLK. A mediates the transcription activity and dimerization of the AHR:ARNT complex region spans residues 167-171; that stretch reads LILEA. The PAC domain maps to 424 to 467; sequence SVMFRFRSKNQEWLWMRTSSFTFQNPYSDEIEYIICTNTNVKNS. Positions 465 to 481 are enriched in polar residues; it reads KNSSQEPRPTLSNTIQR. 2 disordered regions span residues 465–492 and 672–789; these read KNSS…NLPL and TPSS…PFSE. Low complexity predominate over residues 672-696; the sequence is TPSSFSSMSLPGAPTASPGAAAYPS. The segment covering 708 to 719 has biased composition (polar residues); that stretch reads TGQTAGQFQTRT. Composition is skewed to low complexity over residues 723–733 and 743–756; these read VGVWPQWQGQQ and QHVQ…PGQP.

As to quaternary structure, monomer. Homodimer only upon binding to a DNA. Efficient DNA binding requires dimerization with another bHLH protein. Interacts with TACC3. Interacts with HIF1A, EPAS1, NPAS1 and NPAS3; forms a heterodimer that binds core DNA sequence 5'-TACGTG-3' within the hypoxia response element (HRE) of target gene promoters. Forms a heterodimer with AHRR, as well as with other bHLH proteins. Interacts with NOCA7. Interacts with TACC3. Interacts with AHR; the heterodimer ARNT:AHR binds to core DNA sequence 5'-TGCGTG-3' within the dioxin response element (DRE) of target gene promoters and activates their transcription. Interacts with SIM1 and NPAS4.

The protein localises to the nucleus. Required for activity of the AHR. Upon ligand binding, AHR translocates into the nucleus, where it heterodimerizes with ARNT and induces transcription by binding to xenobiotic response elements (XRE). Not required for the ligand-binding subunit to translocate from the cytosol to the nucleus after ligand binding. The complex initiates transcription of genes involved in the regulation of a variety of biological processes, including angiogenesis, hematopoiesis, drug and lipid metabolism, cell motility and immune modulation. The heterodimer binds to core DNA sequence 5'-TACGTG-3' within the hypoxia response element (HRE) of target gene promoters and functions as a transcriptional regulator of the adaptive response to hypoxia. The heterodimer ARNT:AHR binds to core DNA sequence 5'-TGCGTG-3' within the dioxin response element (DRE) of target gene promoters and activates their transcription. The chain is Aryl hydrocarbon receptor nuclear translocator from Homo sapiens (Human).